Consider the following 177-residue polypeptide: TRAF-interacting protein with FHA domain-containing protein A (177 aa).

In terms of domain architecture, FHA spans 48–104 (VAFGRDYNVCRYPLLSNRVSRIQFNLQFFKHFNCSTTAIEIKNLSKKNKLYVDNLEL).

It belongs to the TIFA family. As to quaternary structure, interacts with traf6.

The protein localises to the cytoplasm. Adapter molecule that plays a key role in the activation of pro-inflammatory NF-kappa-B signaling following detection of bacterial pathogen-associated molecular pattern metabolites (PAMPs). Promotes activation of an innate immune response by inducing the oligomerization and polyubiquitination of TRAF6, which leads to the activation of TAK1 and IKK through a proteasome-independent mechanism. The polypeptide is TRAF-interacting protein with FHA domain-containing protein A (Xenopus tropicalis (Western clawed frog)).